Consider the following 657-residue polypeptide: Archaeal Lon protease (657 aa).

Residues 1-123 are Cytoplasmic-facing; the sequence is MEENIESVEE…KAEREKRDRS (123 aa). Position 57–64 (57–64) interacts with ATP; the sequence is GEPGTGKS. Residues 124-144 traverse the membrane as a helical segment; sequence RSIMFVIFSVVLLGIIAAIVL. Position 145 (arginine 145) is a topological domain, extracellular. The chain crosses the membrane as a helical span at residues 146-166; it reads SITLIFFAIMAAAFLYMAMAF. The Cytoplasmic portion of the chain corresponds to 167–657; it reads NPVIRNERAM…ATTRAGNNAA (491 aa). Positions 433–618 constitute a Lon proteolytic domain; that stretch reads GSVVGMVNGL…EDVLRVALVN (186 aa). Catalysis depends on residues serine 525 and lysine 568.

It belongs to the peptidase S16 family. Archaeal LonB subfamily. As to quaternary structure, homohexamer. Organized in a ring with a central cavity.

Its subcellular location is the cell membrane. Functionally, ATP-dependent serine protease that mediates the selective degradation of mutant and abnormal proteins as well as certain short-lived regulatory proteins. Degrades polypeptides processively. The chain is Archaeal Lon protease from Thermoplasma acidophilum (strain ATCC 25905 / DSM 1728 / JCM 9062 / NBRC 15155 / AMRC-C165).